The chain runs to 188 residues: Holliday junction branch migration complex subunit RuvA (188 aa).

A domain I region spans residues 1 to 64; sequence MIAGISGRVL…QDGITLYGFS (64 aa). The segment at 65-143 is domain II; that stretch reads NEMKKELFLS…SAGIKDMRIY (79 aa). Y143 is a region of interest (flexible linker). The interval 143 to 186 is domain III; the sequence is YHESLEALVSLGYPEKQAREAVKQVYREGMKTSELIKEALKFLS.

The protein belongs to the RuvA family. As to quaternary structure, homotetramer. Forms an RuvA(8)-RuvB(12)-Holliday junction (HJ) complex. HJ DNA is sandwiched between 2 RuvA tetramers; dsDNA enters through RuvA and exits via RuvB. An RuvB hexamer assembles on each DNA strand where it exits the tetramer. Each RuvB hexamer is contacted by two RuvA subunits (via domain III) on 2 adjacent RuvB subunits; this complex drives branch migration. In the full resolvosome a probable DNA-RuvA(4)-RuvB(12)-RuvC(2) complex forms which resolves the HJ.

Its subcellular location is the cytoplasm. In terms of biological role, the RuvA-RuvB-RuvC complex processes Holliday junction (HJ) DNA during genetic recombination and DNA repair, while the RuvA-RuvB complex plays an important role in the rescue of blocked DNA replication forks via replication fork reversal (RFR). RuvA specifically binds to HJ cruciform DNA, conferring on it an open structure. The RuvB hexamer acts as an ATP-dependent pump, pulling dsDNA into and through the RuvAB complex. HJ branch migration allows RuvC to scan DNA until it finds its consensus sequence, where it cleaves and resolves the cruciform DNA. Promotes Holliday junction (HJ) branch migration in conjunction with RuvB. This chain is Holliday junction branch migration complex subunit RuvA, found in Thermotoga maritima (strain ATCC 43589 / DSM 3109 / JCM 10099 / NBRC 100826 / MSB8).